The chain runs to 394 residues: MAKEKFDRSKEHANIGTIGHVDHGKTTLTAAIATVLAKNGDSVAQSYDMIDNAPEEKERGITINTSHIEYQTDKRHYAHVDCPGHADYVKNMITGAAQMDGGILVVSAADGPMPQTREHILLSRNVGVPALVVFLNKVDMVDDEELLELVEMEVRDLLSEYDFPGDDVPVIAGSALKALEGDAQYEEKILELMEAVDTYIPTPERDSDKPFMMPVEDVFSITGRGTVATGRVERGQIKVGEEVEIIGLHDTSKTTVTGVEMFRKLLDYAEAGDNIGALLRGVAREDVQRGQVLAAPGSITPHTEFKAEVYVLSKDEGGRHTPFFSNYRPQFYFRTTDVTGVVHLPEGTEMVMPGDNVEMTVELIAPIAIEDGTRFSIREGGRTVGSGVVTEIIK.

Positions 10–204 constitute a tr-type G domain; it reads KEHANIGTIG…AVDTYIPTPE (195 aa). The G1 stretch occupies residues 19–26; that stretch reads GHVDHGKT. 19 to 26 contributes to the GTP binding site; that stretch reads GHVDHGKT. Residue Thr-26 coordinates Mg(2+). Residues 60–64 form a G2 region; it reads GITIN. The tract at residues 81-84 is G3; that stretch reads DCPG. Residues 81 to 85 and 136 to 139 contribute to the GTP site; these read DCPGH and NKVD. Positions 136 to 139 are G4; sequence NKVD. The interval 174 to 176 is G5; it reads SAL.

The protein belongs to the TRAFAC class translation factor GTPase superfamily. Classic translation factor GTPase family. EF-Tu/EF-1A subfamily. In terms of assembly, monomer.

It localises to the cytoplasm. The catalysed reaction is GTP + H2O = GDP + phosphate + H(+). Its function is as follows. GTP hydrolase that promotes the GTP-dependent binding of aminoacyl-tRNA to the A-site of ribosomes during protein biosynthesis. This is Elongation factor Tu from Staphylococcus aureus (strain COL).